Consider the following 134-residue polypeptide: NADH-quinone oxidoreductase subunit A (134 aa).

Transmembrane regions (helical) follow at residues Phe14–Ile34, Phe66–Trp86, and Ile96–Val116.

Belongs to the complex I subunit 3 family. NDH-1 is composed of 13 different subunits. Subunits NuoA, H, J, K, L, M, N constitute the membrane sector of the complex.

The protein localises to the cell membrane. The catalysed reaction is a quinone + NADH + 5 H(+)(in) = a quinol + NAD(+) + 4 H(+)(out). In terms of biological role, NDH-1 shuttles electrons from NADH, via FMN and iron-sulfur (Fe-S) centers, to quinones in the respiratory chain. The immediate electron acceptor for the enzyme in this species is believed to be ubiquinone. Couples the redox reaction to proton translocation (for every two electrons transferred, four hydrogen ions are translocated across the cytoplasmic membrane), and thus conserves the redox energy in a proton gradient. This is NADH-quinone oxidoreductase subunit A from Buchnera aphidicola subsp. Acyrthosiphon pisum (strain APS) (Acyrthosiphon pisum symbiotic bacterium).